We begin with the raw amino-acid sequence, 165 residues long: Xanthine-guanine phosphoribosyltransferase (165 aa).

5-phospho-alpha-D-ribose 1-diphosphate is bound by residues 41 to 42 (RG) and 98 to 106 (DDLTDTGKT). Aspartate 99 contacts Mg(2+). Positions 102 and 145 each coordinate guanine. Aspartate 102 and isoleucine 145 together coordinate xanthine. GMP contacts are provided by residues 102 to 106 (DTGKT) and 144 to 145 (WI).

The protein belongs to the purine/pyrimidine phosphoribosyltransferase family. XGPT subfamily. As to quaternary structure, homotetramer. Mg(2+) serves as cofactor.

The protein resides in the cell inner membrane. The enzyme catalyses GMP + diphosphate = guanine + 5-phospho-alpha-D-ribose 1-diphosphate. The catalysed reaction is XMP + diphosphate = xanthine + 5-phospho-alpha-D-ribose 1-diphosphate. It catalyses the reaction IMP + diphosphate = hypoxanthine + 5-phospho-alpha-D-ribose 1-diphosphate. It functions in the pathway purine metabolism; GMP biosynthesis via salvage pathway; GMP from guanine: step 1/1. It participates in purine metabolism; XMP biosynthesis via salvage pathway; XMP from xanthine: step 1/1. Functionally, purine salvage pathway enzyme that catalyzes the transfer of the ribosyl-5-phosphate group from 5-phospho-alpha-D-ribose 1-diphosphate (PRPP) to the N9 position of the 6-oxopurines guanine and xanthine to form the corresponding ribonucleotides GMP (guanosine 5'-monophosphate) and XMP (xanthosine 5'-monophosphate), with the release of PPi. To a lesser extent, also acts on hypoxanthine. The sequence is that of Xanthine-guanine phosphoribosyltransferase from Chelativorans sp. (strain BNC1).